Consider the following 410-residue polypeptide: Lissencephaly-1 homolog (410 aa).

The LisH domain maps to 7-39 (QRDELNRAIADYLRSNGYEEAYSVFKKEAELDV). The stretch at 56-82 (TSVIRLQKKVMELESKLNEAKEEFTSG) forms a coiled coil. WD repeat units lie at residues 106–147 (GHRS…RTLK), 148–187 (GHTD…CIRT), 190–229 (GHDH…CVKT), 232–271 (GHRE…CKAE), 274–333 (EHEH…CLMT), 336–377 (GHDN…KTLN), and 378–410 (AHEH…WECR).

It belongs to the WD repeat LIS1/nudF family. As to quaternary structure, can self-associate. Component of the cytosolic PAF-AH (I) heterotetrameric enzyme, which is composed of PAFAH1B1 (beta), PAFAH1B2 (alpha2) and PAFAH1B3 (alpha1) subunits. The catalytic activity of the enzyme resides in the alpha1 (PAFAH1B3) and alpha2 (PAFAH1B2) subunits, whereas the beta subunit (PAFAH1B1) has regulatory activity. Trimer formation is not essential for the catalytic activity. Interacts with dynein, dynactin, NDE1 and NDEL1.

It localises to the cytoplasm. Its subcellular location is the cytoskeleton. It is found in the microtubule organizing center. The protein localises to the centrosome. Regulatory subunit (beta subunit) of the cytosolic type I platelet-activating factor (PAF) acetylhydrolase (PAF-AH (I)), an enzyme that catalyzes the hydrolyze of the acetyl group at the sn-2 position of PAF and its analogs and participates in PAF inactivation. Regulates the PAF-AH (I) activity in a catalytic dimer composition-dependent manner. Positively regulates the activity of the minus-end directed microtubule motor protein dynein. May enhance dynein-mediated microtubule sliding by targeting dynein to the microtubule plus end. Required for several dynein- and microtubule-dependent processes such as the maintenance of Golgi integrity, the peripheral transport of microtubule fragments and the coupling of the nucleus and centrosome. May be required for proliferation of neuronal precursors and neuronal migration. This Gallus gallus (Chicken) protein is Lissencephaly-1 homolog.